We begin with the raw amino-acid sequence, 119 residues long: Membrane-anchored ubiquitin-fold protein 6 (119 aa).

The Ubiquitin-like domain occupies 8 to 76; sequence IELKFRLADG…NNRTLAESRL (69 aa). C114 carries the S-palmitoyl cysteine lipid modification. C116 carries the cysteine methyl ester modification. Residue C116 is the site of S-geranylgeranyl cysteine attachment. A propeptide spans 117–119 (removed in mature form); that stretch reads TIL.

Ubiquitous.

The protein resides in the cell membrane. Its function is as follows. May serve as docking site to facilitate the association of other proteins to the plasma membrane. This is Membrane-anchored ubiquitin-fold protein 6 (MUB6) from Arabidopsis thaliana (Mouse-ear cress).